A 96-amino-acid chain; its full sequence is Signal recognition particle 19 kDa protein (96 aa).

The protein belongs to the SRP19 family. In terms of assembly, part of the signal recognition particle protein translocation system, which is composed of SRP and FtsY. Archaeal SRP consists of a 7S RNA molecule of 300 nucleotides and two protein subunits: SRP54 and SRP19.

The protein resides in the cytoplasm. Involved in targeting and insertion of nascent membrane proteins into the cytoplasmic membrane. Binds directly to 7S RNA and mediates binding of the 54 kDa subunit of the SRP. The chain is Signal recognition particle 19 kDa protein from Pyrobaculum arsenaticum (strain DSM 13514 / JCM 11321 / PZ6).